Reading from the N-terminus, the 178-residue chain is ATP synthase subunit delta (178 aa).

This sequence belongs to the ATPase delta chain family. As to quaternary structure, F-type ATPases have 2 components, F(1) - the catalytic core - and F(0) - the membrane proton channel. F(1) has five subunits: alpha(3), beta(3), gamma(1), delta(1), epsilon(1). F(0) has three main subunits: a(1), b(2) and c(10-14). The alpha and beta chains form an alternating ring which encloses part of the gamma chain. F(1) is attached to F(0) by a central stalk formed by the gamma and epsilon chains, while a peripheral stalk is formed by the delta and b chains.

It localises to the cell inner membrane. Its function is as follows. F(1)F(0) ATP synthase produces ATP from ADP in the presence of a proton or sodium gradient. F-type ATPases consist of two structural domains, F(1) containing the extramembraneous catalytic core and F(0) containing the membrane proton channel, linked together by a central stalk and a peripheral stalk. During catalysis, ATP synthesis in the catalytic domain of F(1) is coupled via a rotary mechanism of the central stalk subunits to proton translocation. This protein is part of the stalk that links CF(0) to CF(1). It either transmits conformational changes from CF(0) to CF(1) or is implicated in proton conduction. This is ATP synthase subunit delta from Acinetobacter baylyi (strain ATCC 33305 / BD413 / ADP1).